The primary structure comprises 157 residues: Alanyl-tRNA editing protein AlaX-S (157 aa).

Residues His-9, His-13, Cys-116, and His-120 each coordinate Zn(2+).

Belongs to the class-II aminoacyl-tRNA synthetase family. Editing domain AlaX-S subfamily. Monomer and homodimer; the dimer is less active in tRNA editing and does not have a zinc ion associated with it. Another report shows only a monomeric form. Requires Zn(2+) as cofactor.

It is found in the cytoplasm. In terms of biological role, functions in trans to edit the amino acid moiety from mischarged charged Ser-tRNA(Ala). Has little activity against Gly-tRNA(Ala). This chain is Alanyl-tRNA editing protein AlaX-S (alaXS), found in Pyrococcus horikoshii (strain ATCC 700860 / DSM 12428 / JCM 9974 / NBRC 100139 / OT-3).